We begin with the raw amino-acid sequence, 377 residues long: Putative efflux system component YknX (377 aa).

A helical membrane pass occupies residues 3 to 23 (KVWIGIGIAVIVALFVGINIY). Residues 95–187 (TNEQLSLEKE…RVSDLEVKSE (93 aa)) adopt a coiled-coil conformation.

It belongs to the membrane fusion protein (MFP) (TC 8.A.1) family. As to quaternary structure, part of a complex composed of YknX, YknY and YknZ. The complex interacts with YknW.

Its subcellular location is the cell membrane. In terms of biological role, part of an unusual four-component transporter, which is required for protection against the killing factor SdpC (sporulation-delaying protein). In Bacillus subtilis (strain 168), this protein is Putative efflux system component YknX (yknX).